We begin with the raw amino-acid sequence, 633 residues long: uncharacterized protein (633 aa).

The segment at 12–43 is disordered; that stretch reads ESGTNNYSDTIANGNTLPPRSKKGHSGRRKRS. The span at 13 to 29 shows a compositional bias: polar residues; sequence SGTNNYSDTIANGNTLP. Over residues 31 to 42 the composition is skewed to basic residues; it reads RSKKGHSGRRKR. Helical transmembrane passes span 99-118 and 217-233; these read ILFG…SSAL and NCAF…ITAC. A disordered region spans residues 593–612; that stretch reads DAETNKATGSAKSENIETKS.

The protein resides in the membrane. This is an uncharacterized protein from Saccharomyces cerevisiae (strain ATCC 204508 / S288c) (Baker's yeast).